The primary structure comprises 380 residues: tRNA-specific 2-thiouridylase MnmA (380 aa).

Residues 9 to 16 (GVSGGVDS) and M35 contribute to the ATP site. Positions 94–96 (NPD) are interaction with target base in tRNA. The Nucleophile role is filled by C99. An intrachain disulfide couples C99 to C195. ATP is bound at residue G123. An interaction with tRNA region spans residues 145-147 (KDQ). The active-site Cysteine persulfide intermediate is C195. Residues 308–309 (RY) form an interaction with tRNA region.

This sequence belongs to the MnmA/TRMU family.

It localises to the cytoplasm. The catalysed reaction is S-sulfanyl-L-cysteinyl-[protein] + uridine(34) in tRNA + AH2 + ATP = 2-thiouridine(34) in tRNA + L-cysteinyl-[protein] + A + AMP + diphosphate + H(+). Functionally, catalyzes the 2-thiolation of uridine at the wobble position (U34) of tRNA, leading to the formation of s(2)U34. This chain is tRNA-specific 2-thiouridylase MnmA, found in Stenotrophomonas maltophilia (strain R551-3).